Here is a 177-residue protein sequence, read N- to C-terminus: Large ribosomal subunit protein uL6 (177 aa).

Position 44 is an N6-acetyllysine (K44).

It belongs to the universal ribosomal protein uL6 family. As to quaternary structure, part of the 50S ribosomal subunit.

Functionally, this protein binds to the 23S rRNA, and is important in its secondary structure. It is located near the subunit interface in the base of the L7/L12 stalk, and near the tRNA binding site of the peptidyltransferase center. The chain is Large ribosomal subunit protein uL6 from Escherichia coli O139:H28 (strain E24377A / ETEC).